The sequence spans 885 residues: Leucine--tRNA ligase (885 aa).

Residues 43–53 carry the 'HIGH' region motif; that stretch reads PYTSGQLHMGH. The 'KMSKS' region motif lies at 571 to 575; the sequence is KMSKS. Lysine 574 is a binding site for ATP. Positions 866–885 are disordered; it reads SVANKAEPGRPAIHVDEADD.

The protein belongs to the class-I aminoacyl-tRNA synthetase family.

The protein resides in the cytoplasm. The enzyme catalyses tRNA(Leu) + L-leucine + ATP = L-leucyl-tRNA(Leu) + AMP + diphosphate. This chain is Leucine--tRNA ligase, found in Halobacterium salinarum (strain ATCC 700922 / JCM 11081 / NRC-1) (Halobacterium halobium).